The chain runs to 317 residues: NADH-quinone oxidoreductase subunit H 1 (317 aa).

8 helical membrane-spanning segments follow: residues 7-27, 74-94, 107-127, 147-167, 179-199, 230-250, 257-277, and 297-317; these read IWVNLILILAVLFAFAAMLSW, AVFVLAPAIVAVTTLLAFAVV, IGVLFFLAMSSLGVYSIVLGG, LSYEVFMGLALMGVVMLAGSF, LWFCIPQILGLATFAVAGIAE, FFIGEYVGITLISAMIVTLFF, VLPPLAWFLLKTFIVIICFVL, and VMLPVTLVNLLLTGAVVLSVA.

The protein belongs to the complex I subunit 1 family. As to quaternary structure, NDH-1 is composed of 14 different subunits. Subunits NuoA, H, J, K, L, M, N constitute the membrane sector of the complex.

Its subcellular location is the cell inner membrane. The catalysed reaction is a quinone + NADH + 5 H(+)(in) = a quinol + NAD(+) + 4 H(+)(out). Its function is as follows. NDH-1 shuttles electrons from NADH, via FMN and iron-sulfur (Fe-S) centers, to quinones in the respiratory chain. The immediate electron acceptor for the enzyme in this species is believed to be ubiquinone. Couples the redox reaction to proton translocation (for every two electrons transferred, four hydrogen ions are translocated across the cytoplasmic membrane), and thus conserves the redox energy in a proton gradient. This subunit may bind ubiquinone. The sequence is that of NADH-quinone oxidoreductase subunit H 1 from Nitrosospira multiformis (strain ATCC 25196 / NCIMB 11849 / C 71).